A 481-amino-acid polypeptide reads, in one-letter code: Glutamate--tRNA ligase (481 aa).

Residues 9–19 carry the 'HIGH' region motif; the sequence is PSPTGNLHIGT. Zn(2+) is bound by residues Cys98, Cys100, His125, and Asp127. The short motif at 248–252 is the 'KMSKS' region element; sequence KLSKR. Residue Lys251 coordinates ATP.

It belongs to the class-I aminoacyl-tRNA synthetase family. Glutamate--tRNA ligase type 1 subfamily. As to quaternary structure, monomer. The cofactor is Zn(2+).

The protein resides in the cytoplasm. It carries out the reaction tRNA(Glu) + L-glutamate + ATP = L-glutamyl-tRNA(Glu) + AMP + diphosphate. In terms of biological role, catalyzes the attachment of glutamate to tRNA(Glu) in a two-step reaction: glutamate is first activated by ATP to form Glu-AMP and then transferred to the acceptor end of tRNA(Glu). The sequence is that of Glutamate--tRNA ligase from Synechococcus elongatus (strain ATCC 33912 / PCC 7942 / FACHB-805) (Anacystis nidulans R2).